The following is a 159-amino-acid chain: NADH-quinone oxidoreductase subunit B (159 aa).

[4Fe-4S] cluster contacts are provided by cysteine 37, cysteine 38, cysteine 102, and cysteine 132.

It belongs to the complex I 20 kDa subunit family. As to quaternary structure, NDH-1 is composed of 14 different subunits. Subunits NuoB, C, D, E, F, and G constitute the peripheral sector of the complex. [4Fe-4S] cluster serves as cofactor.

It localises to the cell inner membrane. It catalyses the reaction a quinone + NADH + 5 H(+)(in) = a quinol + NAD(+) + 4 H(+)(out). Its function is as follows. NDH-1 shuttles electrons from NADH, via FMN and iron-sulfur (Fe-S) centers, to quinones in the respiratory chain. Couples the redox reaction to proton translocation (for every two electrons transferred, four hydrogen ions are translocated across the cytoplasmic membrane), and thus conserves the redox energy in a proton gradient. The chain is NADH-quinone oxidoreductase subunit B from Vesicomyosocius okutanii subsp. Calyptogena okutanii (strain HA).